Here is a 530-residue protein sequence, read N- to C-terminus: UDP-glucuronosyltransferase 1A8 (530 aa).

Residues 1-25 (MARTGWTSPIPLCVSLLLTCGFAEA) form the signal peptide. N-linked (GlcNAc...) asparagine glycans are attached at residues N71, N292, and N344. A helical transmembrane segment spans residues 488-504 (VIGFLLAVVLTVAFITF).

Belongs to the UDP-glycosyltransferase family. As to quaternary structure, homodimer. Homooligomer. Interacts with UGT1A1, UGT1A3, UGT1A4, UGT1A6, UGT1A7, UGT1A9 and UGT1A10 to form heterodimers. Isoform 1 interacts with isoform 2/i2 suggesting that oligomerization is involved in negative regulation of transferase activity by isoform 2. Isoform 1 also interacts with respective i2 isoforms of UGT1A1, UGT1A3, UGT1A4, UGT1A6, UGT1A7, UGT1A9 and UGT1A10. As to expression, expressed in kidney, colon and small intestine. Not expressed in liver. In terms of tissue distribution, expressed in liver, kidney, colon and small intestine.

The protein localises to the endoplasmic reticulum membrane. It carries out the reaction glucuronate acceptor + UDP-alpha-D-glucuronate = acceptor beta-D-glucuronoside + UDP + H(+). The catalysed reaction is 17beta-estradiol + UDP-alpha-D-glucuronate = 17beta-estradiol 3-O-(beta-D-glucuronate) + UDP + H(+). It catalyses the reaction 17alpha-estradiol + UDP-alpha-D-glucuronate = 17alpha-estradiol 3-O-(beta-D-glucuronate) + UDP + H(+). The enzyme catalyses estrone + UDP-alpha-D-glucuronate = estrone 3-O-(beta-D-glucuronate) + UDP + H(+). It carries out the reaction 16alpha,17alpha-estriol + UDP-alpha-D-glucuronate = 16alpha,17alpha-estriol 3-O-(beta-D-glucuronate) + UDP + H(+). The catalysed reaction is 2-hydroxy-17beta-estradiol + UDP-alpha-D-glucuronate = 2-hydroxy-17beta-estradiol 3-O-(beta-D-glucuronate) + UDP + H(+). It catalyses the reaction 2-hydroxy-17beta-estradiol + UDP-alpha-D-glucuronate = 17beta-estradiol 2-O-(beta-D-glucuronate) + UDP + H(+). The enzyme catalyses 2-hydroxyestrone + UDP-alpha-D-glucuronate = 2-hydroxyestrone 3-O-(beta-D-glucuronate) + UDP + H(+). It carries out the reaction 4-hydroxy-17beta-estradiol + UDP-alpha-D-glucuronate = 4-hydroxy-17beta-estradiol 3-O-(beta-D-glucuronate) + UDP + H(+). The catalysed reaction is 4-hydroxy-17beta-estradiol + UDP-alpha-D-glucuronate = 17beta-estradiol 4-O-(beta-D-glucuronate) + UDP + H(+). It catalyses the reaction 4-hydroxyestrone + UDP-alpha-D-glucuronate = 4-hydroxyestrone 3-O-(beta-D-glucuronate) + UDP + H(+). The enzyme catalyses 4-hydroxyestrone + UDP-alpha-D-glucuronate = estrone 4-O-(beta-D-glucuronate) + UDP + H(+). It carries out the reaction 2-methoxy-17beta-estradiol + UDP-alpha-D-glucuronate = 2-methoxy-17beta-estradiol 3-O-(beta-D-glucuronate) + UDP + H(+). The catalysed reaction is 2-methoxyestrone + UDP-alpha-D-glucuronate = 2-methoxyestrone 3-O-(beta-D-glucuronate) + UDP + H(+). It catalyses the reaction 4-methoxy-17beta-estradiol + UDP-alpha-D-glucuronate = 4-methoxy-17beta-estradiol 3-O-(beta-D-glucuronate) + UDP + H(+). The enzyme catalyses 4-methoxyestrone + UDP-alpha-D-glucuronate = 4-methoxyestrone 3-O-(beta-D-glucuronate) + UDP + H(+). It carries out the reaction 17beta-hydroxy-5alpha-androstan-3-one + UDP-alpha-D-glucuronate = 5alpha-dihydrotestosterone 17-O-(beta-D-glucuronate) + UDP + H(+). The catalysed reaction is 5alpha-dihydrotestosterone 17-O-(beta-D-glucuronate) + UDP-alpha-D-glucuronate = 5alpha-dihydrotestosterone 17-O-[beta-D-glucuronosyl-(1-&gt;2)-glucuronate] + UDP + H(+). It catalyses the reaction prunetin + UDP-alpha-D-glucuronate = prunetin-4'-O-beta-D-glucuronide + UDP. The enzyme catalyses prunetin + UDP-alpha-D-glucuronate = prunetin-5-O-beta-D-glucuronide + UDP. It carries out the reaction candesartan + UDP-alpha-D-glucuronate = candesartan O-beta-D-glucuronoside + UDP. The catalysed reaction is mycophenolate + UDP-alpha-D-glucuronate = mycophenolate 7-O-beta-D-glucuronide + UDP + H(+). It catalyses the reaction (E)-ferulate + UDP-alpha-D-glucuronate = (E)-4-O-(beta-D-glucuronosyl)-ferulate + UDP + H(+). The enzyme catalyses (E)-ferulate + UDP-alpha-D-glucuronate = (E)-ferulic acid beta-D-glucuronate ester + UDP. UDP-glucuronosyltransferase (UGT) that catalyzes phase II biotransformation reactions in which lipophilic substrates are conjugated with glucuronic acid to increase the metabolite's water solubility, thereby facilitating excretion into either the urine or bile. Essential for the elimination and detoxification of drugs, xenobiotics and endogenous compounds. Catalyzes the glucuronidation of endogenous steroid hormones such as androgens and estrogens. Produces dihydrotestosterone (DHT) diglucuronide from the DHT after two subsequent glucoronidation steps. Involved in the glucuronidation of the phytochemical ferulic acid at the phenolic or the carboxylic acid group. Also catalyzes the glucuronidation of the isoflavones genistein, daidzein, glycitein, formononetin, biochanin A and prunetin, which are phytoestrogens with anticancer and cardiovascular properties. Involved in the glucuronidation of the AGTR1 angiotensin receptor antagonist caderastan, a drug which can inhibit the effect of angiotensin II. Also metabolizes mycophenolate, an immunosuppressive agent. Its function is as follows. Lacks UGT glucuronidation activity but acts as a negative regulator of isoform 1. In Homo sapiens (Human), this protein is UDP-glucuronosyltransferase 1A8.